Consider the following 511-residue polypeptide: ATP synthase subunit alpha 1 (511 aa).

ATP is bound at residue 170-177 (GDRQTGKT).

Belongs to the ATPase alpha/beta chains family. F-type ATPases have 2 components, CF(1) - the catalytic core - and CF(0) - the membrane proton channel. CF(1) has five subunits: alpha(3), beta(3), gamma(1), delta(1), epsilon(1). CF(0) has three main subunits: a(1), b(2) and c(9-12). The alpha and beta chains form an alternating ring which encloses part of the gamma chain. CF(1) is attached to CF(0) by a central stalk formed by the gamma and epsilon chains, while a peripheral stalk is formed by the delta and b chains.

It is found in the cell inner membrane. The catalysed reaction is ATP + H2O + 4 H(+)(in) = ADP + phosphate + 5 H(+)(out). Functionally, produces ATP from ADP in the presence of a proton gradient across the membrane. The alpha chain is a regulatory subunit. The chain is ATP synthase subunit alpha 1 from Gluconobacter oxydans (strain 621H) (Gluconobacter suboxydans).